A 103-amino-acid polypeptide reads, in one-letter code: UPF0145 protein BCE33L0904 (103 aa).

This sequence belongs to the UPF0145 family.

This chain is UPF0145 protein BCE33L0904, found in Bacillus cereus (strain ZK / E33L).